The primary structure comprises 102 residues: Integration host factor subunit alpha (102 aa).

It belongs to the bacterial histone-like protein family. As to quaternary structure, heterodimer of an alpha and a beta chain.

In terms of biological role, this protein is one of the two subunits of integration host factor, a specific DNA-binding protein that functions in genetic recombination as well as in transcriptional and translational control. The sequence is that of Integration host factor subunit alpha from Buchnera aphidicola subsp. Acyrthosiphon pisum (strain 5A).